Consider the following 350-residue polypeptide: UDP-3-O-acylglucosamine N-acyltransferase (350 aa).

Histidine 248 functions as the Proton acceptor in the catalytic mechanism.

Belongs to the transferase hexapeptide repeat family. LpxD subfamily. In terms of assembly, homotrimer.

It catalyses the reaction a UDP-3-O-[(3R)-3-hydroxyacyl]-alpha-D-glucosamine + a (3R)-hydroxyacyl-[ACP] = a UDP-2-N,3-O-bis[(3R)-3-hydroxyacyl]-alpha-D-glucosamine + holo-[ACP] + H(+). The protein operates within bacterial outer membrane biogenesis; LPS lipid A biosynthesis. In terms of biological role, catalyzes the N-acylation of UDP-3-O-acylglucosamine using 3-hydroxyacyl-ACP as the acyl donor. Is involved in the biosynthesis of lipid A, a phosphorylated glycolipid that anchors the lipopolysaccharide to the outer membrane of the cell. This is UDP-3-O-acylglucosamine N-acyltransferase from Nostoc punctiforme (strain ATCC 29133 / PCC 73102).